Here is a 72-residue protein sequence, read N- to C-terminus: Translation initiation factor IF-1 (72 aa).

In terms of domain architecture, S1-like spans 1 to 72; it reads MAKEESIEIE…SKGRITYRYK (72 aa).

Belongs to the IF-1 family. As to quaternary structure, component of the 30S ribosomal translation pre-initiation complex which assembles on the 30S ribosome in the order IF-2 and IF-3, IF-1 and N-formylmethionyl-tRNA(fMet); mRNA recruitment can occur at any time during PIC assembly.

The protein localises to the cytoplasm. Its function is as follows. One of the essential components for the initiation of protein synthesis. Stabilizes the binding of IF-2 and IF-3 on the 30S subunit to which N-formylmethionyl-tRNA(fMet) subsequently binds. Helps modulate mRNA selection, yielding the 30S pre-initiation complex (PIC). Upon addition of the 50S ribosomal subunit IF-1, IF-2 and IF-3 are released leaving the mature 70S translation initiation complex. This Chlorobium phaeovibrioides (strain DSM 265 / 1930) (Prosthecochloris vibrioformis (strain DSM 265)) protein is Translation initiation factor IF-1.